Here is a 398-residue protein sequence, read N- to C-terminus: ORC1-type DNA replication protein 1 (398 aa).

ATP contacts are provided by residues 67–71 (TGKTA), Tyr-208, and Arg-220.

This sequence belongs to the CDC6/cdc18 family.

In terms of biological role, involved in regulation of DNA replication. The sequence is that of ORC1-type DNA replication protein 1 (cdc6-1) from Sulfurisphaera tokodaii (strain DSM 16993 / JCM 10545 / NBRC 100140 / 7) (Sulfolobus tokodaii).